The chain runs to 64 residues: Temporin-ALd (64 aa).

The signal sequence occupies residues 1 to 22 (MFTMKKSLLLLFFLGTIHLSLC). Residues 23–46 (EQERNAEEERRDDLGERQAEVEKR) constitute a propeptide that is removed on maturation. Position 62 is a leucine amide (leucine 62).

Expressed by the skin glands.

The protein resides in the secreted. Its function is as follows. Antimicrobial peptide with activity against Gram-positive and Gram-negative bacteria and against fungi. Has been tested against S.aureus (MIC=1.25 ug/mL), B.pumilus (MIC=2.5 ug/mL), B.cereus (MIC=15.0 ug/mL), E.coli (MIC=1.25 ug/mL), B.dysenteriae (MIC=5.0 ug/mL), A.cacoaceticus (MIC=15.0 ug/mL), P.aeruginosa (MIC=5.0 ug/mL) and C.albicans (MIC=1.25 ug/mL). Also shows a weak hemolytic activity. This chain is Temporin-ALd, found in Amolops loloensis (Lolokou Sucker Frog).